We begin with the raw amino-acid sequence, 70 residues long: MARQCELTGKKANNGYTVSHSHRRTKCLQKANLQTKRIWSPTLKRWLKLQVSTKVIKDLKRKSIDALLKI.

The protein belongs to the bacterial ribosomal protein bL28 family.

The protein localises to the plastid. It is found in the cyanelle. The polypeptide is Large ribosomal subunit protein bL28c (rpl28) (Cyanophora paradoxa).